The primary structure comprises 461 residues: Polycomb group protein FIE1 (461 aa).

Basic residues predominate over residues 1 to 11 (MPPSKARRKRS). Residues 1-56 (MPPSKARRKRSLRDITATVATGTVANSKPGSSSTNEGKQQDKKKEGPQEPDIPPLP) form a disordered region. Residues 18–37 (TVATGTVANSKPGSSSTNEG) are compositionally biased toward polar residues. Basic and acidic residues predominate over residues 38–47 (KQQDKKKEGP). WD repeat units follow at residues 143–186 (DKDE…LDKS), 189–229 (GHGG…CILV), 235–275 (GHRH…IYVE), 301–338 (VHSD…RRPG), 351–391 (PKCS…PVLI), and 398–437 (ECKS…ASSS). Positions 429–461 (EVDPAASSSKPDQAAAPAAGVGAGAGADADADA) are disordered. Residues 432–448 (PAASSSKPDQAAAPAAG) are compositionally biased toward low complexity.

It belongs to the WD repeat ESC family. As to expression, specifically expressed in kernel starting from 6 days after pollination.

The protein localises to the nucleus. Functionally, polycomb group (PcG) protein. PcG proteins act by forming multiprotein complexes, which are required to maintain the transcriptionally repressive state of homeotic genes throughout development. PcG proteins are not required to initiate repression, but to maintain it during later stages of development. They probably act via the methylation of histones, rendering chromatin heritably changed in its expressibility. This Zea mays (Maize) protein is Polycomb group protein FIE1 (FIE1).